A 671-amino-acid polypeptide reads, in one-letter code: MPTASASESSSNQPESSNASGSIDHVLVEDRLFHPSAEFTSKAVISTEEQYEKLATAARENPDEFWRAEALEHLHWFEPFGTVCDWQPPHAKWFVNGKTNACYNSVDAHVAAGRGDRTAIIWEGEPVEDGQPRDQRTLTYAELQTEVAKCAEGLTQLGIGVGDVVSIYMPMTPELAVAMLACARIGAIHSVIFAGFSAESIAERNNDASAKLVITSDGLYRRGKVLPLKATVDEALEKSPTVEKCLVLRRTGDDAPMQEGRDVWWHDVVENQPGEMAAKPLDSETPLFILYTSGSTGKPKGILHTTAGYNLWAKRTFEWVFDHREGDVYWCTADCGWITGHSYVVYGPLSAGATCLMYEGAPNFPAEDRFWDIVERHKVSILYTAPTAVRAFIKWGDEHVDKHDLSSLRLLGSVGEGINPEAWMWYHKKIGGEKCPIVDTWWQTETGGIMMSPLPGITPTKPGSCTRPLPGVVPSIVDELGNSVDSEHGGKLCISQPWPGMLRGIYGDEERFVEQYWSDVPDKYLTGDNARCDTDGYYWIMGRIDDVINVSGHRLSTIEVESALVSHPDVCEAAVVGRPHDLKGQAIAAFVTSNDRGHDDEFRNELKQHVRKQIGALAQPDDIRFTAALPKTRSGKIMRRLLRDVAAGRELVGDTSTLEDLSSLAKLREED.

Residues 1–21 (MPTASASESSSNQPESSNASG) form a disordered region. Residues 221-224 (RRGK), T339, and N363 contribute to the CoA site. ATP is bound by residues 415–417 (GEG), 439–444 (DTWWQT), D528, and R543. S551 is a CoA binding site. R554 serves as a coordination point for ATP. Residues V565, H567, and V570 each contribute to the Mg(2+) site. A CoA-binding site is contributed by R611. An N6-acetyllysine modification is found at K636.

It belongs to the ATP-dependent AMP-binding enzyme family. Requires Mg(2+) as cofactor. In terms of processing, acetylated. Deacetylation by the SIR2-homolog deacetylase activates the enzyme.

The enzyme catalyses acetate + ATP + CoA = acetyl-CoA + AMP + diphosphate. Functionally, catalyzes the conversion of acetate into acetyl-CoA (AcCoA), an essential intermediate at the junction of anabolic and catabolic pathways. AcsA undergoes a two-step reaction. In the first half reaction, AcsA combines acetate with ATP to form acetyl-adenylate (AcAMP) intermediate. In the second half reaction, it can then transfer the acetyl group from AcAMP to the sulfhydryl group of CoA, forming the product AcCoA. This Rhodopirellula baltica (strain DSM 10527 / NCIMB 13988 / SH1) protein is Acetyl-coenzyme A synthetase.